The sequence spans 217 residues: Large ribosomal subunit protein uL3 (217 aa).

A disordered region spans residues 127 to 162 (GFSRGPMSHGSKNHRAPGSTGAGTTPGRIYPGKRMA). Residues 142–153 (APGSTGAGTTPG) show a composition bias toward low complexity.

It belongs to the universal ribosomal protein uL3 family. As to quaternary structure, part of the 50S ribosomal subunit. Forms a cluster with proteins L14 and L19.

Functionally, one of the primary rRNA binding proteins, it binds directly near the 3'-end of the 23S rRNA, where it nucleates assembly of the 50S subunit. The chain is Large ribosomal subunit protein uL3 from Prochlorococcus marinus (strain MIT 9301).